A 242-amino-acid chain; its full sequence is Small ribosomal subunit protein uS2 (242 aa).

This sequence belongs to the universal ribosomal protein uS2 family.

The sequence is that of Small ribosomal subunit protein uS2 from Shewanella baltica (strain OS223).